Consider the following 118-residue polypeptide: Large ribosomal subunit protein uL22 (118 aa).

It belongs to the universal ribosomal protein uL22 family. In terms of assembly, part of the 50S ribosomal subunit.

Functionally, this protein binds specifically to 23S rRNA; its binding is stimulated by other ribosomal proteins, e.g. L4, L17, and L20. It is important during the early stages of 50S assembly. It makes multiple contacts with different domains of the 23S rRNA in the assembled 50S subunit and ribosome. Its function is as follows. The globular domain of the protein is located near the polypeptide exit tunnel on the outside of the subunit, while an extended beta-hairpin is found that lines the wall of the exit tunnel in the center of the 70S ribosome. In Thermomicrobium roseum (strain ATCC 27502 / DSM 5159 / P-2), this protein is Large ribosomal subunit protein uL22.